The following is a 1014-amino-acid chain: Isoleucine--tRNA ligase (1014 aa).

The 'HIGH' region signature appears at 48 to 58 (PTANGRPGIHH). Residues 628–632 (KMSKS) carry the 'KMSKS' region motif. Lysine 631 contributes to the ATP binding site.

Belongs to the class-I aminoacyl-tRNA synthetase family. IleS type 2 subfamily. Monomer. Zn(2+) serves as cofactor.

It is found in the cytoplasm. The catalysed reaction is tRNA(Ile) + L-isoleucine + ATP = L-isoleucyl-tRNA(Ile) + AMP + diphosphate. In terms of biological role, catalyzes the attachment of isoleucine to tRNA(Ile). As IleRS can inadvertently accommodate and process structurally similar amino acids such as valine, to avoid such errors it has two additional distinct tRNA(Ile)-dependent editing activities. One activity is designated as 'pretransfer' editing and involves the hydrolysis of activated Val-AMP. The other activity is designated 'posttransfer' editing and involves deacylation of mischarged Val-tRNA(Ile). In Dehalococcoides mccartyi (strain ATCC BAA-2266 / KCTC 15142 / 195) (Dehalococcoides ethenogenes (strain 195)), this protein is Isoleucine--tRNA ligase.